A 488-amino-acid polypeptide reads, in one-letter code: Auxin transporter-like protein 1 (488 aa).

Positions 1-36 (MSGEKQAEESIVVSGEDEVAGRKVEDSAAEEDIDGN) are disordered. Residues 1–64 (MSGEKQAEES…DAWFSCASNQ (64 aa)) lie on the Cytoplasmic side of the membrane. The chain crosses the membrane as a helical span at residues 65–82 (VAQVLLTLPYSFSQLGML). At 83-84 (SG) the chain is on the extracellular side. The helical transmembrane segment at 85–105 (ILLQIFYGLMGSWTAYLISVL) threads the bilayer. At 106–141 (YVEYRARMEKQEAKSFKNHVIQWFEVLDGLLGPYWK) the chain is on the cytoplasmic side. A helical transmembrane segment spans residues 142–162 (AAGLAFNCTFLLFGSVIQLIA). At 163–178 (CASNIYYINDRLDKRT) the chain is on the extracellular side. The helical transmembrane segment at 179–199 (WTYIFGACCATTVFIPSFHNY) threads the bilayer. Over 200–202 (RIW) the chain is Cytoplasmic. The helical transmembrane segment at 203-223 (SFLGLGMTTYTAWYLTIASFL) threads the bilayer. At 224 to 238 (HGQAEGVTHSGPTKL) the chain is on the extracellular side. The chain crosses the membrane as a helical span at residues 239–259 (VLYFTGATNILYTFGGHAVTV). The Cytoplasmic segment spans residues 260 to 273 (EIMHAMWKPRKFKS). Residues 274-294 (IYLMATLYVFTLTLPSASAVY) form a helical membrane-spanning segment. Topologically, residues 295–320 (WAFGDQLLNHSNAFSLLPKTRFRDTA) are extracellular. Residue Asn-303 is glycosylated (N-linked (GlcNAc...) asparagine). A helical transmembrane segment spans residues 321–341 (VILMLIHQFITFGFACTPLYF). Residues 342–362 (VWEKAIGMHHTKSLCLRALVR) are Cytoplasmic-facing. A helical transmembrane segment spans residues 363–383 (LPVVVPIWFLAIIFPFFGPIN). Position 384 (Ser-384) is a topological domain, extracellular. Residues 385-405 (AVGALLVTFTVYIIPALAHML) traverse the membrane as a helical segment. Residues 406 to 427 (TYRTASARRNAAEKPPFFIPSW) lie on the Cytoplasmic side of the membrane. The chain crosses the membrane as a helical span at residues 428 to 448 (AGVYVINAFIVVWVLVLGFGF). The Extracellular segment spans residues 449-488 (GGWASMTNFIRQIDTFGLFAKCYQCKPPPAPIAAGAHHRR).

It belongs to the amino acid/polyamine transporter 2 family. Amino acid/auxin permease (AAAP) (TC 2.A.18.1) subfamily.

It is found in the cell membrane. Its function is as follows. Carrier protein involved in proton-driven auxin influx. Mediates the formation of auxin gradient from developing leaves (site of auxin biosynthesis) to tips by contributing to the loading of auxin in vascular tissues and facilitating acropetal (base to tip) auxin transport within inner tissues of the root apex, and basipetal (tip to base) auxin transport within outer tissues of the root apex. In Arabidopsis thaliana (Mouse-ear cress), this protein is Auxin transporter-like protein 1 (LAX1).